The following is a 188-amino-acid chain: Elongation factor P (188 aa).

This sequence belongs to the elongation factor P family.

It localises to the cytoplasm. Its pathway is protein biosynthesis; polypeptide chain elongation. In terms of biological role, involved in peptide bond synthesis. Stimulates efficient translation and peptide-bond synthesis on native or reconstituted 70S ribosomes in vitro. Probably functions indirectly by altering the affinity of the ribosome for aminoacyl-tRNA, thus increasing their reactivity as acceptors for peptidyl transferase. This Bradyrhizobium sp. (strain BTAi1 / ATCC BAA-1182) protein is Elongation factor P.